The sequence spans 473 residues: Photosystem II CP43 reaction center protein (473 aa).

Positions 1–14 (MKILYSQRRFYHVE) are excised as a propeptide. T15 is subject to N-acetylthreonine. Position 15 is a phosphothreonine (T15). 5 helical membrane passes run 69–93 (LFEV…PHLA), 134–155 (LIGP…KDKN), 178–200 (KALY…RKIT), 255–275 (KPFA…LSYS), and 291–312 (WFNN…ASQA). Residue E367 coordinates [CaMn4O5] cluster. Residues 447–471 (RARAAAAGFEKGIDRDFEPVLSMTP) traverse the membrane as a helical segment.

Belongs to the PsbB/PsbC family. PsbC subfamily. As to quaternary structure, PSII is composed of 1 copy each of membrane proteins PsbA, PsbB, PsbC, PsbD, PsbE, PsbF, PsbH, PsbI, PsbJ, PsbK, PsbL, PsbM, PsbT, PsbX, PsbY, PsbZ, Psb30/Ycf12, at least 3 peripheral proteins of the oxygen-evolving complex and a large number of cofactors. It forms dimeric complexes. Binds multiple chlorophylls and provides some of the ligands for the Ca-4Mn-5O cluster of the oxygen-evolving complex. It may also provide a ligand for a Cl- that is required for oxygen evolution. PSII binds additional chlorophylls, carotenoids and specific lipids. serves as cofactor.

The protein localises to the plastid. It is found in the chloroplast thylakoid membrane. Its function is as follows. One of the components of the core complex of photosystem II (PSII). It binds chlorophyll and helps catalyze the primary light-induced photochemical processes of PSII. PSII is a light-driven water:plastoquinone oxidoreductase, using light energy to abstract electrons from H(2)O, generating O(2) and a proton gradient subsequently used for ATP formation. This Physcomitrium patens (Spreading-leaved earth moss) protein is Photosystem II CP43 reaction center protein.